A 203-amino-acid chain; its full sequence is 3-isopropylmalate dehydratase small subunit (203 aa).

Belongs to the LeuD family. LeuD type 1 subfamily. As to quaternary structure, heterodimer of LeuC and LeuD.

It carries out the reaction (2R,3S)-3-isopropylmalate = (2S)-2-isopropylmalate. It participates in amino-acid biosynthesis; L-leucine biosynthesis; L-leucine from 3-methyl-2-oxobutanoate: step 2/4. In terms of biological role, catalyzes the isomerization between 2-isopropylmalate and 3-isopropylmalate, via the formation of 2-isopropylmaleate. The polypeptide is 3-isopropylmalate dehydratase small subunit (Rhodospirillum centenum (strain ATCC 51521 / SW)).